Consider the following 525-residue polypeptide: Tigger transposable element-derived protein 2 (525 aa).

The 52-residue stretch at Met1–Ile52 folds into the HTH psq-type domain. DNA-binding regions (H-T-H motif) lie at residues Phe28 to Asn48 and Thr100 to Arg132. The HTH CENPB-type domain occupies Lys67–Ala139. Residues Leu168–Trp385 form the DDE-1 domain. The segment at Gln442–Lys474 is disordered.

It belongs to the tigger transposable element derived protein family.

The protein resides in the nucleus. The sequence is that of Tigger transposable element-derived protein 2 (TIGD2) from Homo sapiens (Human).